A 349-amino-acid chain; its full sequence is Protein RecA (349 aa).

Position 71 to 75 (71 to 75 (SSGKT)) interacts with phosphate. ATP is bound by residues 71-76 (SSGKTT) and 102-105 (DPEY). Gln-196 contacts phosphate.

The protein belongs to the RecA family. Polymerizes non-specifically on ssDNA to form filaments. Interacts with and activates LexA leading to autocatalytic cleavage of LexA, which derepresses the SOS regulon and activates DNA repair.

It is found in the cytoplasm. Functionally, required for homologous recombination (HR) and the bypass of mutagenic DNA lesions (double strand breaks, DSB) by the SOS response. Can catalyze the hydrolysis of ATP in the presence of single-stranded DNA, the ATP-dependent uptake of single-stranded DNA by duplex DNA, and the ATP-dependent hybridization of homologous single-stranded DNAs. Numerous X-ray crystals have been resolved under different conditions which indicate the flexibility of the protein, essential to its function. Gln-196 contributes to this plasticity by acting as a switch residue, which transmits the effect of nucleotide binding to the DNA-binding region. The protein is Protein RecA of Mycolicibacterium smegmatis (strain ATCC 700084 / mc(2)155) (Mycobacterium smegmatis).